The primary structure comprises 228 residues: Ribosomal RNA large subunit methyltransferase E (228 aa).

Positions 76, 78, 99, 115, and 139 each coordinate S-adenosyl-L-methionine. Lys-179 functions as the Proton acceptor in the catalytic mechanism.

Belongs to the class I-like SAM-binding methyltransferase superfamily. RNA methyltransferase RlmE family.

It localises to the cytoplasm. It catalyses the reaction uridine(2552) in 23S rRNA + S-adenosyl-L-methionine = 2'-O-methyluridine(2552) in 23S rRNA + S-adenosyl-L-homocysteine + H(+). Specifically methylates the uridine in position 2552 of 23S rRNA at the 2'-O position of the ribose in the fully assembled 50S ribosomal subunit. The protein is Ribosomal RNA large subunit methyltransferase E of Bradyrhizobium diazoefficiens (strain JCM 10833 / BCRC 13528 / IAM 13628 / NBRC 14792 / USDA 110).